The chain runs to 112 residues: Notch-regulated ankyrin repeat-containing protein A (112 aa).

ANK repeat units follow at residues 48–77 and 81–110; these read EGQT…DIRL and EGWS…YSSG.

Belongs to the NRARP family.

In terms of biological role, regulates independently canonical Wnt and Notch signaling by modulating LEF1 and Notch protein turnover. Stabilizes LEF1, a pivotal transcription factor in the Wnt signaling cascade, by blocking its ubiquitination. Involved in angiogenesis; involved in intersegmental vessel patterning during development. The protein is Notch-regulated ankyrin repeat-containing protein A (nrarpa) of Danio rerio (Zebrafish).